The sequence spans 382 residues: Transforming growth factor beta-1 proprotein (382 aa).

The signal sequence occupies residues 1 to 20; the sequence is MRAVCLMLTALLMLEYVCRS. The segment at 23-68 is straightjacket domain; sequence MSTCKSLDLELVKRKRIEAIRGQILSKLRLPKEPEIDQEGDTEEVP. Residues 69–264 form an arm domain region; it reads ASLMSIYNST…SLPVERHSQL (196 aa). 3 N-linked (GlcNAc...) asparagine glycosylation sites follow: Asn76, Asn116, and Asn125. Positions 218–243 are bowtie tail; that stretch reads GKPMEEFRFKISGMNKLRGNTETLAM. The Cell attachment site motif lies at 235-237; it reads RGN. Intrachain disulfides connect Cys278/Cys286, Cys285/Cys348, Cys314/Cys379, and Cys318/Cys381.

Belongs to the TGF-beta family. In terms of assembly, latency-associated peptide: Homodimer; disulfide-linked. Latency-associated peptide: Interacts with Transforming growth factor beta-1 (TGF-beta-1) chain; interaction is non-covalent and maintains (TGF-beta-1) in a latent state; each Latency-associated peptide (LAP) monomer interacts with TGF-beta-1 in the other monomer. Transforming growth factor beta-1: Homodimer; disulfide-linked. Transforming growth factor beta-1: Interacts with TGF-beta receptors (tgfbr1 and tgfbr2), leading to signal transduction. Interacts with EFEMP2. Transforming growth factor beta-1 proprotein: The precursor proprotein is cleaved in the Golgi apparatus to form Transforming growth factor beta-1 (TGF-beta-1) and Latency-associated peptide (LAP) chains, which remain non-covalently linked, rendering TGF-beta-1 inactive. As to expression, expressed in blood leukocytes, kidney macrophages, brain, gill and spleen but not in liver.

Its subcellular location is the secreted. It localises to the extracellular space. It is found in the extracellular matrix. Its function is as follows. Transforming growth factor beta-1 proprotein: Precursor of the Latency-associated peptide (LAP) and Transforming growth factor beta-1 (TGF-beta-1) chains, which constitute the regulatory and active subunit of TGF-beta-1, respectively. Functionally, required to maintain the Transforming growth factor beta-1 (TGF-beta-1) chain in a latent state during storage in extracellular matrix. Associates non-covalently with TGF-beta-1 and regulates its activation via interaction with 'milieu molecules', such as LTBP1, LRRC32/GARP and LRRC33/NRROS, that control activation of TGF-beta-1. Interaction with integrins (ITGAV:ITGB6 or ITGAV:ITGB8) results in distortion of the Latency-associated peptide chain and subsequent release of the active TGF-beta-1. Transforming growth factor beta-1: Multifunctional protein that regulates the growth and differentiation of various cell types and is involved in various processes, such as normal development, immune function, microglia function and responses to neurodegeneration. Activation into mature form follows different steps: following cleavage of the proprotein in the Golgi apparatus, Latency-associated peptide (LAP) and Transforming growth factor beta-1 (TGF-beta-1) chains remain non-covalently linked rendering TGF-beta-1 inactive during storage in extracellular matrix. At the same time, LAP chain interacts with 'milieu molecules', such as ltbp1, lrrc32/garp and lrrc33/nrros that control activation of TGF-beta-1 and maintain it in a latent state during storage in extracellular milieus. TGF-beta-1 is released from LAP by integrins (ITGAV:ITGB6 or ITGAV:ITGB8): integrin-binding to LAP stabilizes an alternative conformation of the LAP bowtie tail and results in distortion of the LAP chain and subsequent release of the active TGF-beta-1. Once activated following release of LAP, TGF-beta-1 acts by binding to TGF-beta receptors (tgfbr1 and tgfbr2), which transduce signal. While expressed by many cells types, TGF-beta-1 only has a very localized range of action within cell environment thanks to fine regulation of its activation by Latency-associated peptide chain (LAP) and 'milieu molecules'. Plays an important role in bone remodeling: acts as a potent stimulator of osteoblastic bone formation. Can promote either T-helper 17 cells (Th17) or regulatory T-cells (Treg) lineage differentiation in a concentration-dependent manner. Can induce epithelial-to-mesenchymal transition (EMT) and cell migration in various cell types. This chain is Transforming growth factor beta-1 proprotein (tgfb1), found in Oncorhynchus mykiss (Rainbow trout).